Reading from the N-terminus, the 618-residue chain is Probable Xaa-Pro aminopeptidase P (618 aa).

D414, D425, E523, and E537 together coordinate Mn(2+).

It belongs to the peptidase M24B family. Mn(2+) serves as cofactor.

The catalysed reaction is Release of any N-terminal amino acid, including proline, that is linked to proline, even from a dipeptide or tripeptide.. Catalyzes the removal of a penultimate prolyl residue from the N-termini of peptides. In Metarhizium robertsii (strain ARSEF 23 / ATCC MYA-3075) (Metarhizium anisopliae (strain ARSEF 23)), this protein is Probable Xaa-Pro aminopeptidase P (AMPP).